Here is a 339-residue protein sequence, read N- to C-terminus: tRNA N6-adenosine threonylcarbamoyltransferase (339 aa).

Residues H111 and H115 each coordinate Fe cation. Substrate-binding positions include 139–143 (LVSGG), D172, G185, D189, and N280. Residue D308 coordinates Fe cation.

This sequence belongs to the KAE1 / TsaD family. Requires Fe(2+) as cofactor.

It localises to the cytoplasm. The catalysed reaction is L-threonylcarbamoyladenylate + adenosine(37) in tRNA = N(6)-L-threonylcarbamoyladenosine(37) in tRNA + AMP + H(+). Functionally, required for the formation of a threonylcarbamoyl group on adenosine at position 37 (t(6)A37) in tRNAs that read codons beginning with adenine. Is involved in the transfer of the threonylcarbamoyl moiety of threonylcarbamoyl-AMP (TC-AMP) to the N6 group of A37, together with TsaE and TsaB. TsaD likely plays a direct catalytic role in this reaction. The sequence is that of tRNA N6-adenosine threonylcarbamoyltransferase from Phocaeicola vulgatus (strain ATCC 8482 / DSM 1447 / JCM 5826 / CCUG 4940 / NBRC 14291 / NCTC 11154) (Bacteroides vulgatus).